The primary structure comprises 88 residues: Small ribosomal subunit protein bS20 (88 aa).

This sequence belongs to the bacterial ribosomal protein bS20 family.

Binds directly to 16S ribosomal RNA. The protein is Small ribosomal subunit protein bS20 of Aromatoleum aromaticum (strain DSM 19018 / LMG 30748 / EbN1) (Azoarcus sp. (strain EbN1)).